Reading from the N-terminus, the 467-residue chain is Ankyrin repeat and SOCS box protein 10 (467 aa).

7 ANK repeats span residues Glu115–Ser144, Gly147–Ile176, Asp180–Gly209, Glu214–Ala243, Glu247–Ala289, Asp293–Thr322, and Gly326–Val361. An SOCS box domain is found at Tyr412 to Gly464.

The protein belongs to the ankyrin SOCS box (ASB) family. Expressed in the eye. The highest expression is observed in the iris, with moderate levels in the trabecular meshwork (TM), the lamina, and the optic nerve; slightly lower levels in the ciliary body, retina, and choroid; and very low levels in the lens.

The protein localises to the cytoplasm. It localises to the nucleus. The protein operates within protein modification; protein ubiquitination. In terms of biological role, may be a substrate-recognition component of a SCF-like ECS (Elongin-Cullin-SOCS-box protein) E3 ubiquitin-protein ligase complex which mediates the ubiquitination and subsequent proteasomal degradation of target proteins. This is Ankyrin repeat and SOCS box protein 10 (ASB10) from Homo sapiens (Human).